The chain runs to 251 residues: Phosphate import ATP-binding protein PstB (251 aa).

The ABC transporter domain occupies 5–246; sequence IEIENFSAYY…PKNRLTEEYL (242 aa). 37 to 44 is an ATP binding site; it reads GPSGCGKT.

The protein belongs to the ABC transporter superfamily. Phosphate importer (TC 3.A.1.7) family. As to quaternary structure, the complex is composed of two ATP-binding proteins (PstB), two transmembrane proteins (PstC and PstA) and a solute-binding protein (PstS).

It localises to the cell inner membrane. The catalysed reaction is phosphate(out) + ATP + H2O = ADP + 2 phosphate(in) + H(+). Its function is as follows. Part of the ABC transporter complex PstSACB involved in phosphate import. Responsible for energy coupling to the transport system. This chain is Phosphate import ATP-binding protein PstB, found in Thermotoga maritima (strain ATCC 43589 / DSM 3109 / JCM 10099 / NBRC 100826 / MSB8).